The primary structure comprises 798 residues: Cation channel sperm-associated auxiliary subunit delta (798 aa).

The N-terminal stretch at 1–20 (MLMLMLVAAVTMWLRPLVTA) is a signal peptide. Residues 21 to 723 (QLCRSRTVRT…AFPVQLVSAG (703 aa)) are Extracellular-facing. 7 cysteine pairs are disulfide-bonded: Cys23–Cys369, Cys59–Cys145, Cys144–Cys152, Cys387–Cys496, Cys510–Cys701, Cys525–Cys572, and Cys624–Cys652. Asn123 carries N-linked (GlcNAc...) asparagine glycosylation. N-linked (GlcNAc...) asparagine glycans are attached at residues Asn230, Asn240, Asn472, Asn538, and Asn630. Residues 724-745 (VVILLIISSILGSVWLAYKTPK) form a helical membrane-spanning segment. Over 746–798 (LLRTARGRRIKKCATQLCRRCKTVCQFRASATARAGTEPPGRHRTPHGGRSDH) the chain is Cytoplasmic.

The protein belongs to the CATSPERD family. As to quaternary structure, component of the CatSper complex or CatSpermasome composed of the core pore-forming members CATSPER1, CATSPER2, CATSPER3 and CATSPER4 as well as auxiliary members CATSPERB, CATSPERG, CATSPERD, CATSPERE, CATSPERZ, C2CD6/CATSPERT, TMEM249, TMEM262 and EFCAB9. HSPA1 may be an additional auxiliary complex member. The core complex members CATSPER1, CATSPER2, CATSPER3 and CATSPER4 form a heterotetrameric channel. The auxiliary CATSPERB, CATSPERG, CATSPERD and CATSPERE subunits form a pavilion-like structure over the pore which stabilizes the complex through interactions with CATSPER4, CATSPER3, CATSPER1 and CATSPER2 respectively. TMEM262/CATSPERH interacts with CATSPERB, further stabilizing the complex. C2CD6/CATSPERT interacts at least with CATSPERD and is required for targeting the CatSper complex in the flagellar membrane.

The protein resides in the cell projection. Its subcellular location is the cilium. It is found in the flagellum membrane. Functionally, auxiliary component of the CatSper complex, a complex involved in sperm cell hyperactivation. Sperm cell hyperactivation is needed for sperm motility which is essential late in the preparation of sperm for fertilization. Required for CATSPER1 stability before intraflagellar transport and/or incorporation of the CatSper complex channel into the flagellar membrane. In Homo sapiens (Human), this protein is Cation channel sperm-associated auxiliary subunit delta.